Consider the following 393-residue polypeptide: NAD(P)H-quinone oxidoreductase subunit H, chloroplastic (393 aa).

Belongs to the complex I 49 kDa subunit family. In terms of assembly, NDH is composed of at least 16 different subunits, 5 of which are encoded in the nucleus.

It is found in the plastid. The protein localises to the chloroplast thylakoid membrane. The enzyme catalyses a plastoquinone + NADH + (n+1) H(+)(in) = a plastoquinol + NAD(+) + n H(+)(out). It catalyses the reaction a plastoquinone + NADPH + (n+1) H(+)(in) = a plastoquinol + NADP(+) + n H(+)(out). In terms of biological role, NDH shuttles electrons from NAD(P)H:plastoquinone, via FMN and iron-sulfur (Fe-S) centers, to quinones in the photosynthetic chain and possibly in a chloroplast respiratory chain. The immediate electron acceptor for the enzyme in this species is believed to be plastoquinone. Couples the redox reaction to proton translocation, and thus conserves the redox energy in a proton gradient. The polypeptide is NAD(P)H-quinone oxidoreductase subunit H, chloroplastic (Sorghum bicolor (Sorghum)).